A 486-amino-acid polypeptide reads, in one-letter code: Glutamyl-tRNA(Gln) amidotransferase subunit A (486 aa).

Catalysis depends on charge relay system residues K74 and S149. S173 acts as the Acyl-ester intermediate in catalysis.

Belongs to the amidase family. GatA subfamily. As to quaternary structure, heterotrimer of A, B and C subunits.

The catalysed reaction is L-glutamyl-tRNA(Gln) + L-glutamine + ATP + H2O = L-glutaminyl-tRNA(Gln) + L-glutamate + ADP + phosphate + H(+). Its function is as follows. Allows the formation of correctly charged Gln-tRNA(Gln) through the transamidation of misacylated Glu-tRNA(Gln) in organisms which lack glutaminyl-tRNA synthetase. The reaction takes place in the presence of glutamine and ATP through an activated gamma-phospho-Glu-tRNA(Gln). In Prochlorococcus marinus (strain NATL2A), this protein is Glutamyl-tRNA(Gln) amidotransferase subunit A.